Here is a 2364-residue protein sequence, read N- to C-terminus: Cytotoxin-L (2364 aa).

A four-helical bundle region spans residues 1 to 91 (MSLVNKAQLQ…EVLELKNNSL (91 aa)). The GT44 domain maps to 96–468 (KNLHFIWIGG…APDVRSTINL (373 aa)). The segment at 96-468 (KNLHFIWIGG…APDVRSTINL (373 aa)) is glucosyltransferase region. Residues 101–103 (IWI), asparagine 139, 265–270 (LAAASD), and 286–288 (DVD) each bind UDP-alpha-D-glucose. Mg(2+) is bound by residues aspartate 288, glutamate 515, and serine 518. 518–520 (SLW) provides a ligand contact to UDP-alpha-D-glucose. The interval 544–799 (GEDDILDFSQ…KSKNLHELST (256 aa)) is autoprocessing region. Residues glutamate 545 and aspartate 546 each coordinate Zn(2+). A Peptidase C80 domain is found at 567 to 774 (SSSMRTPNKE…EESIIKDISS (208 aa)). 1D-myo-inositol hexakisphosphate contacts are provided by tyrosine 577, lysine 600, and lysine 647. Histidine 653 provides a ligand contact to Zn(2+). The active-site For protease activity is the histidine 653. Residue cysteine 698 is the Nucleophile; for protease activity of the active site. Histidine 757 lines the Zn(2+) pocket. Residues lysine 764, lysine 775, and lysine 792 each contribute to the 1D-myo-inositol hexakisphosphate site. A translocation region region spans residues 800-1500 (LLQEIKNNSN…ESIIRNIYMP (701 aa)). Interaction with host SEMA6A and SEMA6B stretches follow at residues 1433 to 1438 (CIKLIE), 1466 to 1471 (DNETKY), 1484 to 1495 (FTAEFSNESIIR), 1504 to 1511 (NLFIYSSK), and 1596 to 1601 (YNNLDP). 19 Cell wall-binding repeats span residues 1833–1852 (VSGLIYINDSLYYFKPPKNN), 1854–1873 (ITGFTTIDDNKYYFDPTKSG), 1876–1895 (SIGEITIDGKDYYFNKQGIL), 1926–1945 (FIGKLNIDGKIYYFEDNYRA), 1946–1965 (AVEWKSLDGETYYFNPKTGE), 1967–1986 (LKGLHQIGDNKYYFDNNGIM), 1987–2006 (QTGFITINDKVFYFNNDGVM), 2007–2026 (QVGYIEVNGKYFYFGKNGER), 2057–2076 (YNGILNFNGKIYFFDISNTA), 2077–2097 (VVGWGILDDGSTYYFDDNTAE), 2099–2118 (CIGLTVINDCKYYFDDNGIR), 2119–2138 (QLGFITINDNIFYFSESGKI), 2139–2158 (ELGYQNINGNYFYIDESGLV), 2209–2224 (ETGWIENETDKYYFDP), 2227–2249 (KKAYKGINVVDDIKYYFDENGIM), 2250–2269 (KTGLISFENNNYYFNEDGKM), 2270–2289 (QFGYLNIKDKMFYFGKDGKM), 2320–2339 (YTGWLDLDGKRYYFTDEYIA), and 2340–2359 (ATSSLTIDGYNYYFDPDTAE). The tract at residues 1835-2364 (GLIYINDSLY…PDTAELVVSE (530 aa)) is receptor-binding (CROPS) region.

Belongs to the clostridial glucosylating toxin (LCGT) family. In terms of assembly, homomultimer; forms an inactive homomultimer at pH 8, which dissociates at pH 4, leading to cytotoxicity. Interacts with host SEMA6A; interaction promotes toxin entry into host cell. Interacts with host SEMA6B; interaction promotes toxin entry into host cell. Zn(2+) serves as cofactor. Requires Mn(2+) as cofactor. It depends on Mg(2+) as a cofactor. Undergoes autocatalytic cleavage to release the N-terminal part (Glucosyltransferase TcsL), which constitutes the active part of the toxin, in the host cytosol. 1D-myo-inositol hexakisphosphate-binding (InsP6) activates the peptidase C80 domain and promotes autoprocessing.

It localises to the secreted. Its subcellular location is the host endosome membrane. The protein localises to the host cytoplasm. It is found in the host cytosol. The protein resides in the host cell membrane. The enzyme catalyses L-threonyl-[protein] + UDP-alpha-D-glucose = 3-O-(alpha-D-glucosyl)-L-threonyl-[protein] + UDP + H(+). With respect to regulation, protease activity is activated upon binding to 1D-myo-inositol hexakisphosphate (InsP6), which induces conformational reorganization. Functionally, precursor of a cytotoxin that targets the vascular endothelium, inducing an anti-inflammatory effect and resulting in lethal toxic shock syndrome. TcsL constitutes the main toxin that mediates the pathology of P.sordellii infection, an anaerobic Gram-positive bacterium found in soil and in the gastrointestinal and vaginal tracts of animals and humans; although the majority of carriers are asymptomatic, pathogenic P.sordellii infections arise rapidly and are highly lethal. This form constitutes the precursor of the toxin: it enters into host cells and mediates autoprocessing to release the active toxin (Glucosyltransferase TcsL) into the host cytosol. Targets vascular endothelium by binding to the semaphorin proteins SEMA6A and SEMA6B, and enters host cells via clathrin-mediated endocytosis. Once entered into host cells, acidification in the endosome promotes the membrane insertion of the translocation region and formation of a pore, leading to translocation of the GT44 and peptidase C80 domains across the endosomal membrane. This activates the peptidase C80 domain and autocatalytic processing, releasing the N-terminal part (Glucosyltransferase TcsL), which constitutes the active part of the toxin, in the cytosol. In terms of biological role, active form of the toxin, which is released into the host cytosol following autoprocessing and inactivates small GTPases. Acts by mediating monoglucosylation of small GTPases of the Ras (H-Ras/HRAS, K-Ras/KRAS and N-Ras/NRAS) family in host cells at the conserved threonine residue located in the switch I region ('Thr-37/35'), using UDP-alpha-D-glucose as the sugar donor. Does not catalyze monoglucosylation of Ral/RALA. Also able to catalyze monoglucosylation of some members of the Rho family (Rac1 and Rap2A), but with less efficiency than with Ras proteins. Monoglucosylation of host small GTPases completely prevents the recognition of the downstream effector, blocking the GTPases in their inactive form and leading to apoptosis. Induces an anti-inflammatory effect, mainly by inactivating Ras proteins which results in blockage of the cell cycle and killing of immune cells. The absence or moderate local inflammatory response allows C.sordellii spreading in deep tissues, production of toxin which is released in the general circulation and causes a toxic shock syndrome. This chain is Cytotoxin-L, found in Paraclostridium sordellii (Clostridium sordellii).